The sequence spans 513 residues: ABC transporter H family member 2 (513 aa).

The 242-residue stretch at 39-280 (LTMKNIHKTY…EHYQKLYKEC (242 aa)) folds into the ABC transporter domain. 75–82 (GTSGGGKT) lines the ATP pocket. The tract at residues 291 to 471 (VTSVFKNDDD…SSSYSNNNNN (181 aa)) is disordered. Over residues 324–360 (SYNNNNSNLNNNSNSNSNNNSNNNNSKNYASSSSSSS) the composition is skewed to low complexity. A compositionally biased stretch (polar residues) spans 361–386 (VLNGKLSQSTVNNSSIYNHNNDSPFF). A compositionally biased stretch (low complexity) spans 387-471 (NSNNNNNINN…SSSYSNNNNN (85 aa)).

It belongs to the ABC transporter superfamily.

The protein is ABC transporter H family member 2 (abcH2) of Dictyostelium discoideum (Social amoeba).